The chain runs to 303 residues: Exosome complex component RRP4 homolog (303 aa).

One can recognise a KH domain in the interval 175-213 (GILIKVPPHLIKKSKKHFHTLPYGMAVIIGCNGSVWVTP).

It belongs to the RRP4 family. As to quaternary structure, component of the RNA exosome complex. In terms of tissue distribution, ubiquitously expressed.

It is found in the nucleus. The protein localises to the nucleolus. The protein resides in the nucleoplasm. Functionally, non-catalytic component of the RNA exosome complex which has 3'-&gt;5' exoribonuclease activity and participates in a multitude of cellular RNA processing and degradation events. Involved in regulation of antisense ribosomal siRNA production. Involved in response to cold-warm shock. The sequence is that of Exosome complex component RRP4 homolog from Caenorhabditis elegans.